We begin with the raw amino-acid sequence, 407 residues long: Spore germination protein KC (407 aa).

The signal sequence occupies residues 1-20; that stretch reads MVRKCLLAVLMLLSVIVLPG. Cys-21 is lipidated: N-palmitoyl cysteine. The S-diacylglycerol cysteine moiety is linked to residue Cys-21.

The protein belongs to the GerABKC lipoprotein family.

It localises to the cell membrane. In terms of biological role, involved in the germination response to the combination of glucose, fructose, L-asparagine, and KCl. The chain is Spore germination protein KC (gerKC) from Bacillus subtilis (strain 168).